A 110-amino-acid polypeptide reads, in one-letter code: Putative membrane protein insertion efficiency factor (110 aa).

The protein belongs to the UPF0161 family.

It is found in the cell inner membrane. Functionally, could be involved in insertion of integral membrane proteins into the membrane. This is Putative membrane protein insertion efficiency factor from Aliarcobacter butzleri (strain RM4018) (Arcobacter butzleri).